Reading from the N-terminus, the 119-residue chain is Vitelline membrane protein Vm34Ca (119 aa).

The signal sequence occupies residues 1-19; the sequence is MKCIAIVSTICLLAAFVAA. Residues 69–106 form the VM domain; that stretch reads SIPAPPCPKNYLFSCQPNLAPVPCSAPAPSYGSAGAYS.

Belongs to the vitelline membrane protein family. In terms of tissue distribution, follicle cells.

It localises to the secreted. Functionally, major early eggshell protein. This Drosophila melanogaster (Fruit fly) protein is Vitelline membrane protein Vm34Ca (Vm34Ca).